The chain runs to 485 residues: PTS system arbutin-, cellobiose-, and salicin-specific EIIBC component (485 aa).

A PTS EIIB type-1 domain is found at 1-88 (MAKNYAALAR…VSLLPGDMQP (88 aa)). C28 serves as the catalytic Phosphocysteine intermediate; for EIIB activity. 10 helical membrane passes run 102–122 (IGAGILDALIGTMSPLIPAII), 147–167 (LTILNVIGDGAFFFLPLMVAA), 177–197 (MSLAIAIAGVLVHPSFIELMA), 207–227 (FALIPVTAVKYTYTVIPALVM), 254–274 (LIVLIAAPLAILLIGPIGIWI), 285–305 (IHGYLGWLSVAIMGALWPLLV), 330–350 (VMPSEIGANLSLGGSSLAVAW), 363–383 (AAAASAIMAGISEPALYGVAI), 389–409 (LIASLISGFICGAVAGMAGLA), and 433–453 (IVWVFAVMALAVVLSFILTLL). Positions 108-470 (DALIGTMSPL…VEEAAAQARK (363 aa)) constitute a PTS EIIC type-1 domain.

The protein localises to the cell inner membrane. The phosphoenolpyruvate-dependent sugar phosphotransferase system (sugar PTS), a major carbohydrate active -transport system, catalyzes the phosphorylation of incoming sugar substrates concomitantly with their translocation across the cell membrane. This system is involved in arbutin, cellobiose, and salicin transport. The polypeptide is PTS system arbutin-, cellobiose-, and salicin-specific EIIBC component (ascF) (Escherichia coli (strain K12)).